We begin with the raw amino-acid sequence, 88 residues long: Phosphocarrier protein HPr (88 aa).

The HPr domain occupies 1-88 (MAQKTFTVTA…DTMSKEGLGE (88 aa)). Serine 12 carries the post-translational modification Phosphoserine. Histidine 15 (pros-phosphohistidine intermediate) is an active-site residue. Position 46 is a phosphoserine; by HPrK/P (serine 46).

This sequence belongs to the HPr family.

It is found in the cytoplasm. Its activity is regulated as follows. Phosphorylation on Ser-46 inhibits the phosphoryl transfer from enzyme I to HPr. In terms of biological role, general (non sugar-specific) component of the phosphoenolpyruvate-dependent sugar phosphotransferase system (sugar PTS). This major carbohydrate active-transport system catalyzes the phosphorylation of incoming sugar substrates concomitantly with their translocation across the cell membrane. The phosphoryl group from phosphoenolpyruvate (PEP) is transferred to the phosphoryl carrier protein HPr by enzyme I. Phospho-HPr then transfers it to the PTS EIIA domain. Functionally, P-Ser-HPr interacts with the catabolite control protein A (CcpA), forming a complex that binds to DNA at the catabolite response elements cre, operator sites preceding a large number of catabolite-regulated genes. Thus, P-Ser-HPr is a corepressor in carbon catabolite repression (CCR), a mechanism that allows bacteria to coordinate and optimize the utilization of available carbon sources. P-Ser-HPr also plays a role in inducer exclusion, in which it probably interacts with several non-PTS permeases and inhibits their transport activity. This chain is Phosphocarrier protein HPr (ptsH), found in Priestia megaterium (Bacillus megaterium).